The primary structure comprises 341 residues: HTH-type transcriptional repressor PurR (341 aa).

Residues 2–56 form the HTH lacI-type domain; sequence ATIKDVAKRANVSTTTVSHVINKTRFVAEETRNAVWAAIKELHYSPSAVARSLKV. The segment at residues 4–23 is a DNA-binding region (H-T-H motif); sequence IKDVAKRANVSTTTVSHVIN. Residues 48–56 mediate DNA binding; sequence SAVARSLKV. Hypoxanthine is bound by residues Tyr73, Arg190, Thr192, Phe221, and Asp275.

In terms of assembly, homodimer.

It participates in purine metabolism; purine nucleotide biosynthesis [regulation]. Its function is as follows. Is the main repressor of the genes involved in the de novo synthesis of purine nucleotides, regulating purB, purC, purEK, purF, purHD, purL, purMN and guaBA expression. PurR is allosterically activated to bind its cognate DNA by binding the purine corepressors, hypoxanthine or guanine, thereby effecting transcription repression. This chain is HTH-type transcriptional repressor PurR, found in Klebsiella pneumoniae subsp. pneumoniae (strain ATCC 700721 / MGH 78578).